Reading from the N-terminus, the 754-residue chain is Phosphoribosylformylglycinamidine synthase subunit PurL (754 aa).

The segment at 1–21 (MLDTVEHAATTPDQPQPYGEL) is disordered. H54 is an active-site residue. Positions 57 and 101 each coordinate ATP. E103 contributes to the Mg(2+) binding site. Residues 104 to 107 (SHNH) and R126 each bind substrate. H105 functions as the Proton acceptor in the catalytic mechanism. Residue D127 participates in Mg(2+) binding. Q252 contributes to the substrate binding site. Residue D280 participates in Mg(2+) binding. 324–326 (ESQ) provides a ligand contact to substrate. Residues N512 and G549 each contribute to the ATP site. N550 is a binding site for Mg(2+). S552 contacts substrate.

Belongs to the FGAMS family. Monomer. Part of the FGAM synthase complex composed of 1 PurL, 1 PurQ and 2 PurS subunits.

It localises to the cytoplasm. The catalysed reaction is N(2)-formyl-N(1)-(5-phospho-beta-D-ribosyl)glycinamide + L-glutamine + ATP + H2O = 2-formamido-N(1)-(5-O-phospho-beta-D-ribosyl)acetamidine + L-glutamate + ADP + phosphate + H(+). It functions in the pathway purine metabolism; IMP biosynthesis via de novo pathway; 5-amino-1-(5-phospho-D-ribosyl)imidazole from N(2)-formyl-N(1)-(5-phospho-D-ribosyl)glycinamide: step 1/2. Its function is as follows. Part of the phosphoribosylformylglycinamidine synthase complex involved in the purines biosynthetic pathway. Catalyzes the ATP-dependent conversion of formylglycinamide ribonucleotide (FGAR) and glutamine to yield formylglycinamidine ribonucleotide (FGAM) and glutamate. The FGAM synthase complex is composed of three subunits. PurQ produces an ammonia molecule by converting glutamine to glutamate. PurL transfers the ammonia molecule to FGAR to form FGAM in an ATP-dependent manner. PurS interacts with PurQ and PurL and is thought to assist in the transfer of the ammonia molecule from PurQ to PurL. In Mycobacterium bovis (strain ATCC BAA-935 / AF2122/97), this protein is Phosphoribosylformylglycinamidine synthase subunit PurL.